The sequence spans 390 residues: Tumor susceptibility gene 101 protein (390 aa).

The residue at position 2 (Ala-2) is an N-acetylalanine. The UEV domain occupies 2–145; sequence AVSESQLKKM…GDEPPVFSRP (144 aa). The interaction with CEP55 stretch occupies residues 158–162; the sequence is PPNTS. The segment covering 198 to 214 has biased composition (polar residues); that stretch reads ATTSSQYPSQPPVTTVG. Residues 198–220 are disordered; that stretch reads ATTSSQYPSQPPVTTVGPSRDGT. Thr-220 carries the post-translational modification Phosphothreonine. Residues 235–316 adopt a coiled-coil conformation; it reads SDKLRWRMKE…NQSENNDIDE (82 aa). The PTAP motif signature appears at 320-323; sequence PTAP. Residues 322 to 390 form the SB domain; sequence APLYKQILNL…RKTAGLSDLY (69 aa).

The protein belongs to the ubiquitin-conjugating enzyme family. UEV subfamily. Component of the ESCRT-I complex (endosomal sorting complex required for transport I) which consists of TSG101, VPS28, a VPS37 protein (VPS37A to -D) and MVB12A or MVB12B in a 1:1:1:1 stoichiometry. Interacts with VPS37A, VPS37B and VPS37C. Interacts with DMAP1. Interacts with ubiquitin. Interacts with stathmin, GMCL and AATF. Component of an ESCRT-I complex (endosomal sorting complex required for transport I) which consists of TSG101, VPS28, VPS37A and UBAP1 in a 1:1:1:1 stoichiometry. Interacts with HGS; the interaction mediates the association with the ESCRT-0 complex. Interacts with GGA1 and GGA3. Interacts (via UEV domain) with PDCD6IP/AIP1. Interacts with VPS28, SNF8 and VPS36. Self-associates. Interacts with MVB12A; the association appears to be mediated by the TSG101-VPS37 binary subcomplex. Interacts with VPS37D. Interacts with LRSAM1. Interacts with CEP55; the interaction is required for cytokinesis but not for viral budding. Interacts with PDCD6. Interacts with LITAF. Interacts with MGRN1. Interacts with ARRDC1; recruits TSG101 to the plasma membrane. In terms of assembly, (Microbial infection) Interacts with HIV-1 p6. As to quaternary structure, (Microbial infection) Interacts with human spumavirus Gag. (Microbial infection) Interacts with HTLV-1 Gag. In terms of assembly, (Microbial infection) Interacts with Ebola virus VP40. As to quaternary structure, (Microbial infection) Interacts with EIAV p9; the interaction has been shown in vitro. (Microbial infection) Interacts with Lassa virus protein Z. In terms of assembly, (Microbial infection) Interacts with hepatitis E virus protein ORF3. In terms of processing, monoubiquitinated at multiple sites by LRSAM1 and by MGRN1. Ubiquitination inactivates it, possibly by regulating its shuttling between an active membrane-bound protein and an inactive soluble form. Ubiquitination by MGRN1 requires the presence of UBE2D1. As to expression, heart, brain, placenta, lung, liver, skeletal, kidney and pancreas.

The protein localises to the cytoplasm. The protein resides in the early endosome membrane. It is found in the late endosome membrane. It localises to the cytoskeleton. Its subcellular location is the microtubule organizing center. The protein localises to the centrosome. The protein resides in the midbody. It is found in the midbody ring. It localises to the nucleus. Component of the ESCRT-I complex, a regulator of vesicular trafficking process. Binds to ubiquitinated cargo proteins and is required for the sorting of endocytic ubiquitinated cargos into multivesicular bodies (MVBs). Mediates the association between the ESCRT-0 and ESCRT-I complex. Required for completion of cytokinesis; the function requires CEP55. May be involved in cell growth and differentiation. Acts as a negative growth regulator. Involved in the budding of many viruses through an interaction with viral proteins that contain a late-budding motif P-[ST]-A-P. This interaction is essential for viral particle budding of numerous retroviruses. Required for the exosomal release of SDCBP, CD63 and syndecan. It may also play a role in the extracellular release of microvesicles that differ from the exosomes. The chain is Tumor susceptibility gene 101 protein (TSG101) from Homo sapiens (Human).